Here is a 141-residue protein sequence, read N- to C-terminus: MAKKVVDQFKLQIPAGKANPSPPVGPALGQRGVNIMEFCKAFNEKTKDMMGFNIPVVITVYSDRSFTFVTKQPPATDLIKKAAGIQKGSDNPLKNKVGKITQAQLEEIAKTKMPDLNTTDLEAAKRIIAGSCRSMGVEIVD.

This sequence belongs to the universal ribosomal protein uL11 family. As to quaternary structure, part of the ribosomal stalk of the 50S ribosomal subunit. Interacts with L10 and the large rRNA to form the base of the stalk. L10 forms an elongated spine to which L12 dimers bind in a sequential fashion forming a multimeric L10(L12)X complex. One or more lysine residues are methylated.

Its function is as follows. Forms part of the ribosomal stalk which helps the ribosome interact with GTP-bound translation factors. This chain is Large ribosomal subunit protein uL11, found in Nitratiruptor sp. (strain SB155-2).